Reading from the N-terminus, the 383-residue chain is Mannan endo-1,4-beta-mannosidase A (383 aa).

The signal sequence occupies residues 1-18 (MKFSQALLSLASLALAAA). N-linked (GlcNAc...) asparagine glycosylation is present at N75. A substrate-binding site is contributed by W97. N-linked (GlcNAc...) asparagine glycosylation is present at N199. Residues N210 and 211–213 (EPR) each bind substrate. Catalysis depends on E211, which acts as the Proton donor/acceptor. C214 and C217 are oxidised to a cystine. Substrate contacts are provided by Y279 and W283. A disulfide bridge links C301 with C308. E312 serves as the catalytic Nucleophile. An intrachain disulfide couples C320 to C369. A glycan (N-linked (GlcNAc...) asparagine) is linked at N332. Residue W342 participates in substrate binding.

This sequence belongs to the glycosyl hydrolase 5 (cellulase A) family. As to quaternary structure, monomer.

The protein localises to the secreted. It carries out the reaction Random hydrolysis of (1-&gt;4)-beta-D-mannosidic linkages in mannans, galactomannans and glucomannans.. Functionally, endo-1,4-mannanase that catalyzes the random hydrolysis of (1-&gt;4)-beta-D-mannosidic linkages in mannans and heteromannans. It is a crucial enzyme for depolymerization of seed galactomannans and wood galactoglucomannans. Active against locust bean gum and gum guar. Also has transglycosylation activity. The polypeptide is Mannan endo-1,4-beta-mannosidase A (manA) (Emericella nidulans (strain FGSC A4 / ATCC 38163 / CBS 112.46 / NRRL 194 / M139) (Aspergillus nidulans)).